We begin with the raw amino-acid sequence, 238 residues long: 1-(5-phosphoribosyl)-5-[(5-phosphoribosylamino)methylideneamino] imidazole-4-carboxamide isomerase (238 aa).

The Proton acceptor role is filled by D8. D130 functions as the Proton donor in the catalytic mechanism.

It belongs to the HisA/HisF family.

Its subcellular location is the cytoplasm. It carries out the reaction 1-(5-phospho-beta-D-ribosyl)-5-[(5-phospho-beta-D-ribosylamino)methylideneamino]imidazole-4-carboxamide = 5-[(5-phospho-1-deoxy-D-ribulos-1-ylimino)methylamino]-1-(5-phospho-beta-D-ribosyl)imidazole-4-carboxamide. It participates in amino-acid biosynthesis; L-histidine biosynthesis; L-histidine from 5-phospho-alpha-D-ribose 1-diphosphate: step 4/9. This Methanococcus maripaludis (strain C7 / ATCC BAA-1331) protein is 1-(5-phosphoribosyl)-5-[(5-phosphoribosylamino)methylideneamino] imidazole-4-carboxamide isomerase.